The following is a 278-amino-acid chain: MSIDGLPPLREVIERHDLMPKKSLGQNFLFDLNLTSKIARQAGNLQDQPVIEVGPGPGGLTRALLAQGAYVTAIERDERCLDALAEIEAHYPGRLRIISGDALEQDFSALFPDGPKPRIVANLPYNVGTQLLLNWLLVEPWPPFYSSMTLMFQREVAERIVATPDSDHYGRLGVLAGWRTVSKISFDVPPQAFTPPPKVMSSVVHIIPRENPLPCNANALGQITQAAFGQRRKMLRQSLKPVGGAELLEKTGIDGTRRAETLSVEEFVALANAYRPIK.

S-adenosyl-L-methionine is bound by residues asparagine 27, leucine 29, glycine 54, glutamate 75, aspartate 101, and asparagine 122.

The protein belongs to the class I-like SAM-binding methyltransferase superfamily. rRNA adenine N(6)-methyltransferase family. RsmA subfamily.

Its subcellular location is the cytoplasm. It carries out the reaction adenosine(1518)/adenosine(1519) in 16S rRNA + 4 S-adenosyl-L-methionine = N(6)-dimethyladenosine(1518)/N(6)-dimethyladenosine(1519) in 16S rRNA + 4 S-adenosyl-L-homocysteine + 4 H(+). In terms of biological role, specifically dimethylates two adjacent adenosines (A1518 and A1519) in the loop of a conserved hairpin near the 3'-end of 16S rRNA in the 30S particle. May play a critical role in biogenesis of 30S subunits. The chain is Ribosomal RNA small subunit methyltransferase A from Brucella anthropi (strain ATCC 49188 / DSM 6882 / CCUG 24695 / JCM 21032 / LMG 3331 / NBRC 15819 / NCTC 12168 / Alc 37) (Ochrobactrum anthropi).